A 520-amino-acid chain; its full sequence is Pleckstrin homology domain-containing family A member 8 (520 aa).

The PH domain maps to 1–93 (MEGVLYKWTN…WLVALGSAKA (93 aa)). The residue at position 139 (Thr-139) is a Phosphothreonine. The residue at position 145 (Ser-145) is a Phosphoserine. Thr-153 is subject to Phosphothreonine. The segment covering 255 to 268 (ISSEENTDGNTTVQ) has biased composition (polar residues). Residues 255–303 (ISSEENTDGNTTVQGERMKEDGEENLESHDRDLAQPGSDSVCSPESPWE) form a disordered region. The span at 270–287 (ERMKEDGEENLESHDRDL) shows a compositional bias: basic and acidic residues. Residues 311-520 (TFFSTMNTSF…IHGLESDEVV (210 aa)) are glycolipid transfer protein homology domain.

In terms of assembly, homodimer. Interacts with ARF1; the interaction together with phosphatidylinositol 4-phosphate binding is required for FAPP2 GlcCer transfer ability.

The protein resides in the golgi apparatus. Its subcellular location is the trans-Golgi network membrane. It localises to the membrane. Its function is as follows. Cargo transport protein that is required for apical transport from the trans-Golgi network (TGN). Transports AQP2 from the trans-Golgi network (TGN) to sites of AQP2 phosphorylation. Mediates the non-vesicular transport of glucosylceramide (GlcCer) from the trans-Golgi network (TGN) to the plasma membrane and plays a pivotal role in the synthesis of complex glycosphingolipids. Binding of both phosphatidylinositol 4-phosphate (PIP) and ARF1 are essential for the GlcCer transfer ability. Also required for primary cilium formation, possibly by being involved in the transport of raft lipids to the apical membrane, and for membrane tubulation. In Rattus norvegicus (Rat), this protein is Pleckstrin homology domain-containing family A member 8 (Plekha8).